The sequence spans 458 residues: UDP-N-acetylmuramate--L-alanine ligase (458 aa).

112 to 118 (GMHGKTT) contacts ATP.

Belongs to the MurCDEF family.

The protein resides in the cytoplasm. The catalysed reaction is UDP-N-acetyl-alpha-D-muramate + L-alanine + ATP = UDP-N-acetyl-alpha-D-muramoyl-L-alanine + ADP + phosphate + H(+). The protein operates within cell wall biogenesis; peptidoglycan biosynthesis. Its function is as follows. Cell wall formation. This Acidobacterium capsulatum (strain ATCC 51196 / DSM 11244 / BCRC 80197 / JCM 7670 / NBRC 15755 / NCIMB 13165 / 161) protein is UDP-N-acetylmuramate--L-alanine ligase.